The chain runs to 453 residues: uncharacterized protein (453 aa).

Residues 5–63 enclose the TRAM domain; sequence LLKKNQSIELTIEDLTHDGSGVGKIDGYPLFIPNTLPGEKVTAKIIKLNKNYGFARMEN. 4 residues coordinate [4Fe-4S] cluster: Cys76, Cys82, Cys85, and Cys162. S-adenosyl-L-methionine contacts are provided by Gln285, Tyr314, Glu335, and Asp383. The active-site Nucleophile is Cys410.

This sequence belongs to the class I-like SAM-binding methyltransferase superfamily. RNA M5U methyltransferase family.

This is an uncharacterized protein from Listeria monocytogenes serotype 4b (strain F2365).